A 212-amino-acid chain; its full sequence is Imidazole glycerol phosphate synthase subunit HisH 2 (212 aa).

A Glutamine amidotransferase type-1 domain is found at His-4–Ile-211. Cys-82 functions as the Nucleophile in the catalytic mechanism. Residues His-186 and Glu-188 contribute to the active site.

As to quaternary structure, heterodimer of HisH and HisF.

Its subcellular location is the cytoplasm. It carries out the reaction 5-[(5-phospho-1-deoxy-D-ribulos-1-ylimino)methylamino]-1-(5-phospho-beta-D-ribosyl)imidazole-4-carboxamide + L-glutamine = D-erythro-1-(imidazol-4-yl)glycerol 3-phosphate + 5-amino-1-(5-phospho-beta-D-ribosyl)imidazole-4-carboxamide + L-glutamate + H(+). It catalyses the reaction L-glutamine + H2O = L-glutamate + NH4(+). It functions in the pathway amino-acid biosynthesis; L-histidine biosynthesis; L-histidine from 5-phospho-alpha-D-ribose 1-diphosphate: step 5/9. In terms of biological role, IGPS catalyzes the conversion of PRFAR and glutamine to IGP, AICAR and glutamate. The HisH subunit provides the glutamine amidotransferase activity that produces the ammonia necessary to HisF for the synthesis of IGP and AICAR. In Parasynechococcus marenigrum (strain WH8102), this protein is Imidazole glycerol phosphate synthase subunit HisH 2 (hisH2).